The primary structure comprises 105 residues: Large ribosomal subunit protein eL36 (105 aa).

The protein belongs to the eukaryotic ribosomal protein eL36 family. As to quaternary structure, component of the large ribosomal subunit.

The protein resides in the cytoplasm. It is found in the cytosol. Functionally, component of the large ribosomal subunit. The ribosome is a large ribonucleoprotein complex responsible for the synthesis of proteins in the cell. In Xenopus laevis (African clawed frog), this protein is Large ribosomal subunit protein eL36 (rpl36).